The sequence spans 123 residues: uncharacterized protein (123 aa).

A helical membrane pass occupies residues 5-25; the sequence is GTLVIIFAIVLILCIMLLFFY. The tract at residues 32–53 is disordered; the sequence is KSGVLPPPIPPPTPPPPKKKYD. Residues 36-47 are compositionally biased toward pro residues; that stretch reads LPPPIPPPTPPP.

It belongs to the asfivirus CP123L family.

It localises to the host membrane. The protein localises to the virion. This is an uncharacterized protein from Ornithodoros (relapsing fever ticks).